The chain runs to 146 residues: Ecotin-like protein 1 (146 aa).

It belongs to the protease inhibitor I11 (ecotin) family.

This Leishmania infantum protein is Ecotin-like protein 1 (ISP1).